The following is a 275-amino-acid chain: Large ribosomal subunit protein uL2 (275 aa).

The interval 223 to 275 is disordered; sequence VAMNPIDHPHGGGEGRTGEAREPVSPWGTPSKGYKTRRNKRTNNMIVQRRKRK. The segment covering 229–244 has biased composition (basic and acidic residues); it reads DHPHGGGEGRTGEARE.

Belongs to the universal ribosomal protein uL2 family. Part of the 50S ribosomal subunit. Forms a bridge to the 30S subunit in the 70S ribosome.

Functionally, one of the primary rRNA binding proteins. Required for association of the 30S and 50S subunits to form the 70S ribosome, for tRNA binding and peptide bond formation. It has been suggested to have peptidyltransferase activity; this is somewhat controversial. Makes several contacts with the 16S rRNA in the 70S ribosome. The chain is Large ribosomal subunit protein uL2 from Bordetella avium (strain 197N).